The chain runs to 237 residues: HTH-type transcriptional regulator GmuR (237 aa).

The HTH gntR-type domain maps to 1–69; that stretch reads MNKYEIIANE…RGHGTFIIQS (69 aa). Residues 29–48 constitute a DNA-binding region (H-T-H motif); that stretch reads EVSLAKEFNSSRMTMKRALD.

The protein resides in the cytoplasm. In terms of biological role, transcriptional repressor of the gmuBACDREFG operon which is involved in the uptake and degradation of glucomannan. This Bacillus subtilis (strain 168) protein is HTH-type transcriptional regulator GmuR (gmuR).